A 356-amino-acid polypeptide reads, in one-letter code: Phosphoribosylformylglycinamidine cyclo-ligase (356 aa).

It belongs to the AIR synthase family.

It is found in the cytoplasm. The enzyme catalyses 2-formamido-N(1)-(5-O-phospho-beta-D-ribosyl)acetamidine + ATP = 5-amino-1-(5-phospho-beta-D-ribosyl)imidazole + ADP + phosphate + H(+). The protein operates within purine metabolism; IMP biosynthesis via de novo pathway; 5-amino-1-(5-phospho-D-ribosyl)imidazole from N(2)-formyl-N(1)-(5-phospho-D-ribosyl)glycinamide: step 2/2. This Acinetobacter baylyi (strain ATCC 33305 / BD413 / ADP1) protein is Phosphoribosylformylglycinamidine cyclo-ligase.